The sequence spans 535 residues: Transmembrane protein 151 homolog (535 aa).

3 helical membrane-spanning segments follow: residues 27–47 (GYGK…YATY), 73–93 (YNFV…MECW), and 254–274 (PWFL…SWPL). The segment at 498–535 (ASISHSSSKDLKSLTLKNNNGAANNNNNNNNENPEEQP) is disordered. A compositionally biased stretch (low complexity) spans 510–529 (SLTLKNNNGAANNNNNNNNE).

It belongs to the TMEM151 family.

Its subcellular location is the membrane. This Caenorhabditis briggsae protein is Transmembrane protein 151 homolog.